An 888-amino-acid polypeptide reads, in one-letter code: DNA mismatch repair protein MutS (888 aa).

641–648 (GPNMAGKS) provides a ligand contact to ATP.

This sequence belongs to the DNA mismatch repair MutS family.

This protein is involved in the repair of mismatches in DNA. It is possible that it carries out the mismatch recognition step. This protein has a weak ATPase activity. The protein is DNA mismatch repair protein MutS of Rickettsia bellii (strain OSU 85-389).